Here is a 41-residue protein sequence, read N- to C-terminus: Ranatuerin-2PLg (41 aa).

The propeptide occupies 1-11 (DDGVEMTEEEV). A disulfide bridge links cysteine 36 with cysteine 41.

The protein belongs to the frog skin active peptide (FSAP) family. Ranatuerin subfamily.

The protein localises to the secreted. Antimicrobial peptide. In Lithobates palustris (Pickerel frog), this protein is Ranatuerin-2PLg.